A 298-amino-acid chain; its full sequence is Tyrosine recombinase XerC (298 aa).

Positions 1 to 84 (MNHIQDAFLN…TLRTFYEYWM (84 aa)) constitute a Core-binding (CB) domain. In terms of domain architecture, Tyr recombinase spans 105 to 286 (YLPQFFYEEE…SNQQLRKVYL (182 aa)). Residues R145, K169, H238, R241, and H264 contribute to the active site. The O-(3'-phospho-DNA)-tyrosine intermediate role is filled by Y273.

It belongs to the 'phage' integrase family. XerC subfamily. Forms a cyclic heterotetrameric complex composed of two molecules of XerC and two molecules of XerD.

It is found in the cytoplasm. Functionally, site-specific tyrosine recombinase, which acts by catalyzing the cutting and rejoining of the recombining DNA molecules. The XerC-XerD complex is essential to convert dimers of the bacterial chromosome into monomers to permit their segregation at cell division. It also contributes to the segregational stability of plasmids. The chain is Tyrosine recombinase XerC from Staphylococcus aureus (strain USA300).